Here is a 577-residue protein sequence, read N- to C-terminus: Cleavage stimulation factor subunit 2 (577 aa).

At serine 14 the chain carries Phosphoserine. One can recognise an RRM domain in the interval 16–94; sequence RSVFVGNIPY…RALRVDNAAS (79 aa). The interval 108 to 248 is interactions with CSTF3 and SYMPK; it reads APVIESPYGE…VNGAPPLMQA (141 aa). A Glycyl lysine isopeptide (Lys-Gly) (interchain with G-Cter in SUMO2) cross-link involves residue lysine 189. The segment at 207-230 is disordered; it reads PVHGAGPGSGSNVSMNQQNPQAPQ. Arginine 308 bears the Omega-N-methylarginine mark. Positions 319 to 409 are disordered; that stretch reads RGLLGDAPND…DGRGGRDPRG (91 aa). The segment covering 360 to 373 has biased composition (basic and acidic residues); that stretch reads PGHESRGPPPHELR. Residues 410-414 form a 1; approximate repeat; it reads IDARG. The interval 410–469 is 12 X 5 AA tandem repeats of M-E-A-R-[AG]; sequence IDARGMEARAMEARGLDARGLEARAMEARAMEARAMEARAMEARAMEVRGMEARGMDTRG. 2 tandem repeats follow at residues 415–419 and 420–424. The stretch at 425-429 is one 4; approximate repeat; sequence LDARG. The 5; approximate repeat unit spans residues 430 to 434; sequence LEARA. A run of 4 repeats spans residues 435 to 439, 440 to 444, 445 to 449, and 450 to 454. Residues 455 to 459 form a 10; approximate repeat; sequence MEVRG. Copy 11 of the repeat occupies 460 to 464; it reads MEARG. A 12; approximate repeat occupies 465-469; the sequence is MDTRG. Omega-N-methylarginine occurs at positions 468 and 475. A disordered region spans residues 509–532; it reads LQGASIQGGSQPGGFSPGQNQVTP. The tract at residues 514 to 577 is interaction with RPO2TC1; it reads IQGGSQPGGF…EQIQKSTGAP (64 aa). A phosphoserine mark is found at serine 518 and serine 524.

As to quaternary structure, the CSTF complex is composed of CSTF1 (50 kDa subunit), CSTF2 (64 kDa subunit) and CSTF3 (77 kDa subunit). CSTF2 directly interacts with CSTF3, SYMPK and RPO2TC1. Interacts with HSF1 in heat-stressed cells. Interacts with CPSF2, CPSF3 and FIP1L1. Interacts with DDX1.

Its subcellular location is the nucleus. In terms of biological role, one of the multiple factors required for polyadenylation and 3'-end cleavage of mammalian pre-mRNAs. This subunit is directly involved in the binding to pre-mRNAs. In Pongo abelii (Sumatran orangutan), this protein is Cleavage stimulation factor subunit 2 (CSTF2).